Here is a 331-residue protein sequence, read N- to C-terminus: UPF0194 membrane protein Ent638_1286 (331 aa).

The signal sequence occupies residues 1–16; the sequence is MKKPVVVILAVVVLLA. Residues 107 to 208 are a coiled coil; the sequence is EEVAQAEAAV…LDLHDTTLIA (102 aa).

This sequence belongs to the UPF0194 family.

The protein localises to the periplasm. This chain is UPF0194 membrane protein Ent638_1286, found in Enterobacter sp. (strain 638).